A 318-amino-acid chain; its full sequence is Putative S-adenosyl-L-methionine-dependent methyltransferase MMAR_1595 (318 aa).

S-adenosyl-L-methionine-binding positions include Glu-132 and 161–162 (DL).

It belongs to the UPF0677 family.

Exhibits S-adenosyl-L-methionine-dependent methyltransferase activity. The sequence is that of Putative S-adenosyl-L-methionine-dependent methyltransferase MMAR_1595 from Mycobacterium marinum (strain ATCC BAA-535 / M).